A 142-amino-acid polypeptide reads, in one-letter code: Large ribosomal subunit protein uL13 (142 aa).

Belongs to the universal ribosomal protein uL13 family. In terms of assembly, part of the 50S ribosomal subunit.

In terms of biological role, this protein is one of the early assembly proteins of the 50S ribosomal subunit, although it is not seen to bind rRNA by itself. It is important during the early stages of 50S assembly. The protein is Large ribosomal subunit protein uL13 of Pseudomonas syringae pv. syringae (strain B728a).